Consider the following 25-residue polypeptide: Glucomannokinase (25 aa).

Belongs to the ROK (NagC/XylR) family. As to quaternary structure, homodimer.

It catalyses the reaction D-glucose + ATP = D-glucose 6-phosphate + ADP + H(+). It carries out the reaction D-mannose + ATP = D-mannose 6-phosphate + ADP + H(+). The protein operates within carbohydrate degradation; glycolysis; D-glyceraldehyde 3-phosphate and glycerone phosphate from D-glucose: step 1/4. It functions in the pathway carbohydrate metabolism; mannose metabolism. With respect to regulation, competitively inhibited by 2-deoxy-glucose. The enzyme has great affinity for glucose and mannose. This is Glucomannokinase from Segatella bryantii (Prevotella bryantii).